The following is a 401-amino-acid chain: Proline-rich protein 30 (401 aa).

Polar residues predominate over residues Pro69–Asp80. Disordered regions lie at residues Pro69–Ser93, Ser129–Gly191, and Gln357–Ser401. Composition is skewed to low complexity over residues Pro83–Ser93 and Ser129–Ser147. Composition is skewed to polar residues over residues Arg148 to Ser186 and Gln357 to Leu368.

This chain is Proline-rich protein 30 (Prr30), found in Mus musculus (Mouse).